A 1593-amino-acid chain; its full sequence is Autotransporter CRAC (1593 aa).

The signal sequence occupies residues 1–54; that stretch reads MNKVYNTVWNESTGMWVVTSELTRKGGRRPRQIRRTALAGLIAGLLLPSAPALA. The segment covering 65–85 has biased composition (polar residues); the sequence is GATSSSMSLNAGDTATDTTIN. 2 disordered regions span residues 65–100 and 1267–1286; these read GATSSSMSLNAGDTATDTTINSGGSQRVSSGGSATS and KADSSQPGTDNPGTDNPVPP. Residues 86–97 show a composition bias toward low complexity; sequence SGGSQRVSSGGS. Positions 1269 to 1280 are enriched in polar residues; it reads DSSQPGTDNPGT. Positions 1325–1593 constitute an Autotransporter domain; the sequence is NTRSPGGVWG…TGSVGFRINF (269 aa).

Glycosylated by heptosyltransferas BAHTCr. Glycosylation is required for adhesion to mammalian cells and colonization of the mouse host gastrointestinal tract.

It localises to the cell outer membrane. Autotransporter required for the colonization of the mouse host gastrointestinal tract, possibly by mediating bacteria adhesion to host cells. This is Autotransporter CRAC from Citrobacter rodentium (strain ICC168) (Citrobacter freundii biotype 4280).